Consider the following 314-residue polypeptide: Probable 5-dehydro-4-deoxyglucarate dehydratase (314 aa).

The protein belongs to the DapA family.

It carries out the reaction 5-dehydro-4-deoxy-D-glucarate + H(+) = 2,5-dioxopentanoate + CO2 + H2O. It functions in the pathway carbohydrate acid metabolism; D-glucarate degradation; 2,5-dioxopentanoate from D-glucarate: step 2/2. The protein is Probable 5-dehydro-4-deoxyglucarate dehydratase of Bradyrhizobium sp. (strain ORS 278).